Here is a 119-residue protein sequence, read N- to C-terminus: Ribonuclease P protein component (119 aa).

It belongs to the RnpA family. As to quaternary structure, consists of a catalytic RNA component (M1 or rnpB) and a protein subunit.

The catalysed reaction is Endonucleolytic cleavage of RNA, removing 5'-extranucleotides from tRNA precursor.. Its function is as follows. RNaseP catalyzes the removal of the 5'-leader sequence from pre-tRNA to produce the mature 5'-terminus. It can also cleave other RNA substrates such as 4.5S RNA. The protein component plays an auxiliary but essential role in vivo by binding to the 5'-leader sequence and broadening the substrate specificity of the ribozyme. The sequence is that of Ribonuclease P protein component from Borreliella burgdorferi (strain ATCC 35210 / DSM 4680 / CIP 102532 / B31) (Borrelia burgdorferi).